The chain runs to 454 residues: Protection of telomeres protein 1b (454 aa).

It belongs to the telombin family. As to quaternary structure, interacts with TRB1, TRB2 and TRB3. As to expression, expressed at low levels in roots, rosette leaves, cauline leaves, stems and flowers.

It localises to the nucleus. The protein resides in the chromosome. The protein localises to the telomere. Its function is as follows. Negatively regulates telomerase activity and participates in chromosome end protection. Binds RNA non-specifically. Associates with a regulatory Pol III-dependent lncRNA, which represses telomerase activity in response to DNA damage. Binds single-stranded telomeric DNA with weak affinity. The polypeptide is Protection of telomeres protein 1b (Arabidopsis thaliana (Mouse-ear cress)).